Consider the following 951-residue polypeptide: Sodium/potassium exporting P-type ATPase 1 (951 aa).

Topologically, residues Met1–Val57 are cytoplasmic. The helical transmembrane segment at Leu58–Phe78 threads the bilayer. The Extracellular portion of the chain corresponds to Ala79–Asp82. The chain crosses the membrane as a helical span at residues His83–Gln103. The Cytoplasmic portion of the chain corresponds to Glu104 to Met247. A helical membrane pass occupies residues Ala248–Phe268. At Glu269–Asp273 the chain is on the extracellular side. The chain crosses the membrane as a helical span at residues Ile274–Ile294. The Cytoplasmic segment spans residues Thr295–Lys717. The active-site 4-aspartylphosphate intermediate is the Asp330. Residues Asp330 and Thr332 each coordinate Mg(2+). Residues Thr332, Glu414, Lys467, Arg511, Thr575, Gly576, Asp577, Arg636, and Lys642 each contribute to the ATP site. A Mg(2+)-binding site is contributed by Asp661. Residue Asn664 coordinates ATP. The helical transmembrane segment at Phe718–Ala738 threads the bilayer. The Extracellular portion of the chain corresponds to Phe739–Asn743. The chain crosses the membrane as a helical span at residues Gly744–Thr764. The Cytoplasmic segment spans residues Pro765–Met799. The helical transmembrane segment at Val800–Phe820 threads the bilayer. Residues Gly821–Thr840 lie on the Extracellular side of the membrane. A helical membrane pass occupies residues Val841–Tyr861. Topologically, residues Asn862 to Arg885 are cytoplasmic. A helical transmembrane segment spans residues Leu886–Thr906. Residues Leu907 to Thr916 are Extracellular-facing. Residues Ile917–Leu937 form a helical membrane-spanning segment. Over Tyr938–Ile951 the chain is Cytoplasmic.

This sequence belongs to the cation transport ATPase (P-type) (TC 3.A.3) family. Type IID subfamily. Mg(2+) is required as a cofactor. In terms of processing, the active site is phosphorylated in presence of sodium or potassium and in conditions of higher pH. Not phosphorylated in presence of calcium ions.

It is found in the cell membrane. It carries out the reaction Na(+)(in) + ATP + H2O = Na(+)(out) + ADP + phosphate + H(+). The catalysed reaction is K(+)(in) + ATP + H2O = K(+)(out) + ADP + phosphate + H(+). Catalyzes the hydrolysis of ATP coupled with the export of sodium and potassium from the cell. Appears to export potassium more efficiently than sodium. May transport other cations such as lithium. Sodium/potassium efflux ATPases are involved in salt tolerance and maintaining the membrane potential across the plasma membrane in high salinity (Na+) or alkaline (K+) environments. This chain is Sodium/potassium exporting P-type ATPase 1, found in Marchantia polymorpha (Common liverwort).